The following is a 538-amino-acid chain: Phosphoenolpyruvate carboxykinase (ATP) (538 aa).

Arginine 64, tyrosine 205, and lysine 211 together coordinate substrate. Residues lysine 211, histidine 230, and 246 to 254 contribute to the ATP site; that span reads GLSGTGKTT. Mn(2+) contacts are provided by lysine 211 and histidine 230. Aspartate 267 provides a ligand contact to Mn(2+). ATP is bound by residues glutamate 295, arginine 331, 447 to 448, and threonine 453; that span reads RI. Arginine 331 is a substrate binding site.

This sequence belongs to the phosphoenolpyruvate carboxykinase (ATP) family. Monomer. It depends on Mn(2+) as a cofactor.

It localises to the cytoplasm. It catalyses the reaction oxaloacetate + ATP = phosphoenolpyruvate + ADP + CO2. Its pathway is carbohydrate biosynthesis; gluconeogenesis. Involved in the gluconeogenesis. Catalyzes the conversion of oxaloacetate (OAA) to phosphoenolpyruvate (PEP) through direct phosphoryl transfer between the nucleoside triphosphate and OAA. The chain is Phosphoenolpyruvate carboxykinase (ATP) from Haemophilus influenzae (strain PittGG).